Reading from the N-terminus, the 431-residue chain is Selenocysteine lyase (431 aa).

At K239 the chain carries N6-(pyridoxal phosphate)lysine. The active-site S-selanylcysteine intermediate is the C367.

The protein belongs to the class-V pyridoxal-phosphate-dependent aminotransferase family. Homodimer. Requires pyridoxal 5'-phosphate as cofactor.

The protein localises to the cytoplasm. It is found in the cytosol. The enzyme catalyses L-selenocysteine + AH2 = hydrogenselenide + L-alanine + A + H(+). Functionally, catalyzes the decomposition of L-selenocysteine to L-alanine and elemental selenium. This Xenopus tropicalis (Western clawed frog) protein is Selenocysteine lyase (scly).